Consider the following 326-residue polypeptide: Neuferricin homolog (326 aa).

An N-terminal signal peptide occupies residues 1-34 (MDKNRRRTDDAGLMTKTLAGIAALVFFLSFICSS). The 100-residue stretch at 98–197 (KHVFTPEQLH…KEYPLVGVVA (100 aa)) folds into the Cytochrome b5 heme-binding domain.

The protein belongs to the cytochrome b5 family. MAPR subfamily.

The protein resides in the secreted. In terms of biological role, heme-binding protein. The protein is Neuferricin homolog (tag-131) of Caenorhabditis elegans.